A 53-amino-acid polypeptide reads, in one-letter code: Alpha-1-antiproteinase 1 (53 aa).

The tract at residues E1–L28 is disordered.

It belongs to the serpin family. In terms of processing, N-glycosylated; contains biantennary glycans. Plasma.

Its subcellular location is the secreted. The polypeptide is Alpha-1-antiproteinase 1 (Equus caballus (Horse)).